A 321-amino-acid chain; its full sequence is Nod factor export ATP-binding protein I (321 aa).

The ABC transporter domain occupies 17–247; that stretch reads LSVEGLRKRY…EIGCDVVEVY (231 aa). Residue 49-56 coordinates ATP; sequence GPNGAGKT.

This sequence belongs to the ABC transporter superfamily. Lipooligosaccharide exporter (TC 3.A.1.102) family. In terms of assembly, the complex is composed of two ATP-binding proteins (NodI) and two transmembrane proteins (NodJ).

It is found in the cell inner membrane. Its function is as follows. Part of the ABC transporter complex NodIJ involved in the export of the nodulation factors (Nod factors), the bacterial signal molecules that induce symbiosis and subsequent nodulation induction. Nod factors are LCO (lipo-chitin oligosaccharide), a modified beta-1,4-linked N-acetylglucosamine oligosaccharide. This subunit is responsible for energy coupling to the transport system. The sequence is that of Nod factor export ATP-binding protein I from Ralstonia nicotianae (strain ATCC BAA-1114 / GMI1000) (Ralstonia solanacearum).